The sequence spans 877 residues: Envelope glycoprotein gp160 (877 aa).

An N-terminal signal peptide occupies residues 1–19 (MKLTLLIGILLIGIGVVLN). Residues 20-707 (TRQQWVTVFY…SWFDFSKWLN (688 aa)) lie on the Extracellular side of the membrane. 22 N-linked (GlcNAc...) asparagine; by host glycosylation sites follow: asparagine 36, asparagine 69, asparagine 118, asparagine 135, asparagine 148, asparagine 158, asparagine 173, asparagine 204, asparagine 216, asparagine 258, asparagine 261, asparagine 272, asparagine 282, asparagine 288, asparagine 300, asparagine 312, asparagine 322, asparagine 379, asparagine 420, asparagine 431, asparagine 495, and asparagine 498. Intrachain disulfides connect cysteine 102/cysteine 224, cysteine 109/cysteine 215, cysteine 114/cysteine 174, cysteine 237/cysteine 267, and cysteine 247/cysteine 259. The V1 stretch occupies residues 114 to 173 (CVELNSSEPTTTPKSTTASTTNITASTTTLPCVQNKTSTVLESCNETIIEKELNEEPASN). Positions 174 to 215 (CTFAMAGYVRDQKKKYSVVWNDAEIMCKKGNNSNRECYMIHC) are V2. The V3 stretch occupies residues 317–349 (CKRPGNKTVLPVTIMAGLVFHSQRYNTRLRQAW). A disulfide bridge connects residues cysteine 317 and cysteine 350. Disulfide bonds link cysteine 402-cysteine 478 and cysteine 409-cysteine 451. Residues 409–451 (CKMDWFLNYLNNRTVDPDHNPCNGTKGKGKAPGPCAQRTYVAC) are V4. Residues 494-501 (KNRTNVTL) form a V5 region. Residues 544-564 (VPFVLGFLGFLGAAGTAMGAA) form a fusion peptide region. An immunosuppression region spans residues 607–623 (LNARVTALEKYLEDQAR). N-linked (GlcNAc...) asparagine; by host glycosylation is found at asparagine 652 and asparagine 668. The stretch at 668–692 (NITTQLEEARAQEEKNLDAYQKLSS) forms a coiled coil. Residues 689-710 (KLSSWSDFWSWFDFSKWLNILK) form an MPER; binding to GalCer region. Residues 708–728 (ILKIGFLDVLGIIGLRLLYTV) form a helical membrane-spanning segment. Over 729–877 (YSCIARVRQG…VRQGLEGILN (149 aa)) the chain is Cytoplasmic. A YXXL motif; contains endocytosis signal motif is present at residues 739 to 742 (YSPL). Residues 751–779 (WKGQPDNAEGPGEGGDKRKNSSEPWQKES) form a disordered region.

The mature envelope protein (Env) consists of a homotrimer of non-covalently associated gp120-gp41 heterodimers. The resulting complex protrudes from the virus surface as a spike. Interacts with host CD4 and CCR5. Gp120 also interacts with the C-type lectins CD209/DC-SIGN and CLEC4M/DC-SIGNR (collectively referred to as DC-SIGN(R)). In terms of assembly, the mature envelope protein (Env) consists of a homotrimer of non-covalently associated gp120-gp41 heterodimers. The resulting complex protrudes from the virus surface as a spike. Specific enzymatic cleavages in vivo yield mature proteins. Envelope glycoproteins are synthesized as an inactive precursor that is heavily N-glycosylated and processed likely by host cell furin in the Golgi to yield the mature SU and TM proteins. The cleavage site between SU and TM requires the minimal sequence [KR]-X-[KR]-R.

The protein resides in the virion membrane. It is found in the host cell membrane. It localises to the host endosome membrane. Functionally, the surface protein gp120 (SU) attaches the virus to the host lymphoid cell by binding to the primary receptor CD4. This interaction induces a structural rearrangement creating a high affinity binding site for a chemokine coreceptor like CCR5. This peculiar 2 stage receptor-interaction strategy allows gp120 to maintain the highly conserved coreceptor-binding site in a cryptic conformation, protected from neutralizing antibodies. These changes are transmitted to the transmembrane protein gp41 and are thought to activate its fusogenic potential by unmasking its fusion peptide. In terms of biological role, surface protein gp120 (SU) may target the virus to gut-associated lymphoid tissue (GALT) by binding host ITGA4/ITGB7 (alpha-4/beta-7 integrins), a complex that mediates T-cell migration to the GALT. Interaction between gp120 and ITGA4/ITGB7 would allow the virus to enter GALT early in the infection, infecting and killing most of GALT's resting CD4+ T-cells. This T-cell depletion is believed to be the major insult to the host immune system leading to AIDS. The surface protein gp120 is a ligand for CD209/DC-SIGN and CLEC4M/DC-SIGNR, which are respectively found on dendritic cells (DCs), and on endothelial cells of liver sinusoids and lymph node sinuses. These interactions allow capture of viral particles at mucosal surfaces by these cells and subsequent transmission to permissive cells. DCs are professional antigen presenting cells, critical for host immunity by inducing specific immune responses against a broad variety of pathogens. They act as sentinels in various tissues where they take up antigen, process it, and present it to T-cells following migration to lymphoid organs. SIV subverts the migration properties of dendritic cells to gain access to CD4+ T-cells in lymph nodes. Virus transmission to permissive T-cells occurs either in trans (without DCs infection, through viral capture and transmission), or in cis (following DCs productive infection, through the usual CD4-gp120 interaction), thereby inducing a robust infection. In trans infection, bound virions remain infectious over days and it is proposed that they are not degraded, but protected in non-lysosomal acidic organelles within the DCs close to the cell membrane thus contributing to the viral infectious potential during DCs' migration from the periphery to the lymphoid tissues. On arrival at lymphoid tissues, intact virions recycle back to DCs' cell surface allowing virus transmission to CD4+ T-cells. Virion capture also seems to lead to MHC-II-restricted viral antigen presentation, and probably to the activation of SIV-specific CD4+ cells. Its function is as follows. The transmembrane protein gp41 (TM) acts as a class I viral fusion protein. Under the current model, the protein has at least 3 conformational states: pre-fusion native state, pre-hairpin intermediate state, and post-fusion hairpin state. During fusion of viral and target intracellular membranes, the coiled coil regions (heptad repeats) assume a trimer-of-hairpins structure, positioning the fusion peptide in close proximity to the C-terminal region of the ectodomain. The formation of this structure appears to drive apposition and subsequent fusion of viral and target cell membranes. Complete fusion occurs in host cell endosomes. The virus undergoes clathrin-dependent internalization long before endosomal fusion, thus minimizing the surface exposure of conserved viral epitopes during fusion and reducing the efficacy of inhibitors targeting these epitopes. Membranes fusion leads to delivery of the nucleocapsid into the cytoplasm. Functionally, the envelope glycoprotein gp160 precursor down-modulates cell surface CD4 antigen by interacting with it in the endoplasmic reticulum and blocking its transport to the cell surface. In terms of biological role, the gp120-gp41 heterodimer allows rapid transcytosis of the virus through CD4 negative cells such as simple epithelial monolayers of the intestinal, rectal and endocervical epithelial barriers. Both gp120 and gp41 specifically recognize glycosphingolipids galactosyl-ceramide (GalCer) or 3' sulfo-galactosyl-ceramide (GalS) present in the lipid rafts structures of epithelial cells. Binding to these alternative receptors allows the rapid transcytosis of the virus through the epithelial cells. This transcytotic vesicle-mediated transport of virions from the apical side to the basolateral side of the epithelial cells does not involve infection of the cells themselves. The protein is Envelope glycoprotein gp160 (env) of Cercopithecidae (Old World monkeys).